A 626-amino-acid polypeptide reads, in one-letter code: Glyco-Gag protein (626 aa).

Over 1–67 (LGDVPGTSGA…VWSRSRAARP (67 aa)) the chain is Cytoplasmic. The chain crosses the membrane as a helical span at residues 68–86 (VCCSIVLCCFCLTVFLYLS). Over 87–626 (ENMGQTATTP…PQASLLTLDD (540 aa)) the chain is Extracellular. N-linked (GlcNAc...) asparagine; by host glycosylation is present at asparagine 113. Pro residues-rich tracts occupy residues 199-212 (PSAP…PLST) and 249-261 (DPPP…PPSP). Residues 199 to 306 (PSAPSLPPEP…STTSQAFPLR (108 aa)) form a disordered region. Residue asparagine 480 is glycosylated (N-linked (GlcNAc...) asparagine; by host). Basic and acidic residues-rich tracts occupy residues 522 to 554 (RETP…EKER) and 574 to 607 (RQDR…DCPK). A disordered region spans residues 522 to 626 (RETPEEREER…PQASLLTLDD (105 aa)). Residues 590–607 (DQCAYCKEKGHWARDCPK) form a CCHC-type zinc finger.

Glycosylated by host. In terms of processing, cleaved by host near the middle of the molecule, releasing the c-terminal half containing capsid and nucleoprotein domains op GAG.

It localises to the host cell membrane. Its function is as follows. Plays a role in viral particle release. Presumably acts by facilitating the fission of the virion bud at the cell surface. May prevent the antiviral activity of murine APOBEC3. This chain is Glyco-Gag protein, found in Mus musculus (Mouse).